A 673-amino-acid chain; its full sequence is DNA mismatch repair protein MutL (673 aa).

It belongs to the DNA mismatch repair MutL/HexB family.

This protein is involved in the repair of mismatches in DNA. It is required for dam-dependent methyl-directed DNA mismatch repair. May act as a 'molecular matchmaker', a protein that promotes the formation of a stable complex between two or more DNA-binding proteins in an ATP-dependent manner without itself being part of a final effector complex. This chain is DNA mismatch repair protein MutL, found in Ehrlichia chaffeensis (strain ATCC CRL-10679 / Arkansas).